We begin with the raw amino-acid sequence, 160 residues long: Phosphopantetheine adenylyltransferase (160 aa).

Position 11 (threonine 11) interacts with substrate. Residues 11–12 and histidine 19 each bind ATP; that span reads TF. Residues lysine 43, leucine 75, and arginine 89 each contribute to the substrate site. ATP is bound by residues 90-92, glutamate 100, and 125-131; these read GLR and HMFVSAS.

Belongs to the bacterial CoaD family. Homohexamer. It depends on Mg(2+) as a cofactor.

The protein localises to the cytoplasm. It carries out the reaction (R)-4'-phosphopantetheine + ATP + H(+) = 3'-dephospho-CoA + diphosphate. The protein operates within cofactor biosynthesis; coenzyme A biosynthesis; CoA from (R)-pantothenate: step 4/5. In terms of biological role, reversibly transfers an adenylyl group from ATP to 4'-phosphopantetheine, yielding dephospho-CoA (dPCoA) and pyrophosphate. This chain is Phosphopantetheine adenylyltransferase, found in Methylobacillus flagellatus (strain ATCC 51484 / DSM 6875 / VKM B-1610 / KT).